We begin with the raw amino-acid sequence, 469 residues long: Citrate synthase, mitochondrial (469 aa).

Residues 1–33 (MAPVMRLGSAALRSSIHLTSRQTAFTAARCYSS) constitute a mitochondrion transit peptide. The active site involves histidine 352.

The protein belongs to the citrate synthase family.

The protein resides in the mitochondrion matrix. The catalysed reaction is oxaloacetate + acetyl-CoA + H2O = citrate + CoA + H(+). Its pathway is carbohydrate metabolism; tricarboxylic acid cycle; isocitrate from oxaloacetate: step 1/2. This is Citrate synthase, mitochondrial (cit-1) from Neurospora crassa (strain ATCC 24698 / 74-OR23-1A / CBS 708.71 / DSM 1257 / FGSC 987).